The chain runs to 415 residues: METQQSRFLQYITRGSLVQQILLGLAAGIILASLSTQAALAAGLLGTLFVGALKAVAPILVLVLVMASIANHQQGQKTNIRPVLFLYLIGTFSAALIAVVLSVLFPSTLALNAQAADITPPSGIVEVLEGLLMSVIANPIHALLNANYIGILVWAVGLGIAFRHGSGSTKSMINDASNAVTMIVRVVIRFAPLGIFGLVASTLAETGFGALWGYAHLLMVLIGGMLLVALVVNPLIVYWKIRSNPYPLVLRCLRESGVTAFFTRSSAANIPVNMELCRKLNLDEDTYSVAIPLGATINMAGAAITITVLTLAAAHTLGIQIDVPTALLLSVVASLCACGASGVAGGSLLLIPLACSMFGISNDIAMQVVAVGFIIGVLQDSAETAVNSSTDVMFIAAVCHAEDAKLAEKERLNLL.

8 helical membrane-spanning segments follow: residues 21-41 (ILLG…AALA), 45-65 (LGTL…LVLV), 85-105 (FLYL…SVLF), 142-162 (ALLN…GIAF), 193-213 (LGIF…ALWG), 217-237 (LLMV…PLIV), 289-309 (VAIP…ITVL), and 331-351 (VVAS…LLLI).

Belongs to the dicarboxylate/amino acid:cation symporter (DAACS) (TC 2.A.23) family.

The protein resides in the cell inner membrane. It catalyses the reaction L-serine(in) + Na(+)(in) = L-serine(out) + Na(+)(out). The catalysed reaction is L-threonine(in) + Na(+)(in) = L-threonine(out) + Na(+)(out). Functionally, involved in the import of serine and threonine into the cell, with the concomitant import of sodium (symport system). This Pectobacterium atrosepticum (strain SCRI 1043 / ATCC BAA-672) (Erwinia carotovora subsp. atroseptica) protein is Serine/threonine transporter SstT.